The following is a 363-amino-acid chain: Uroporphyrinogen decarboxylase (363 aa).

Substrate contacts are provided by residues 27–31 (RQAGR), Asp-77, Tyr-157, Thr-212, and His-333.

Belongs to the uroporphyrinogen decarboxylase family. Homodimer.

It is found in the cytoplasm. The enzyme catalyses uroporphyrinogen III + 4 H(+) = coproporphyrinogen III + 4 CO2. The protein operates within porphyrin-containing compound metabolism; protoporphyrin-IX biosynthesis; coproporphyrinogen-III from 5-aminolevulinate: step 4/4. Catalyzes the decarboxylation of four acetate groups of uroporphyrinogen-III to yield coproporphyrinogen-III. The protein is Uroporphyrinogen decarboxylase of Cupriavidus necator (strain ATCC 17699 / DSM 428 / KCTC 22496 / NCIMB 10442 / H16 / Stanier 337) (Ralstonia eutropha).